A 172-amino-acid polypeptide reads, in one-letter code: Small ribosomal subunit protein uS5 (172 aa).

An S5 DRBM domain is found at 15–78; sequence YIEKLVNIRR…DKARKRMKSV (64 aa).

This sequence belongs to the universal ribosomal protein uS5 family. In terms of assembly, part of the 30S ribosomal subunit. Contacts proteins S4 and S8.

Functionally, with S4 and S12 plays an important role in translational accuracy. Its function is as follows. Located at the back of the 30S subunit body where it stabilizes the conformation of the head with respect to the body. The polypeptide is Small ribosomal subunit protein uS5 (Ruthia magnifica subsp. Calyptogena magnifica).